Consider the following 648-residue polypeptide: MIRRETFVDDILKEIREIIVQMVPREAGITDVEFEGPELVIYVKNPEAMMKDGELIKNLAKVLKKRISVRPDPDILLPPEKAEELIKQLVPPEAEITNISFDPSVGEVLIEARKPGLVIGKNGETLRLITQKVHWAPRVVRTPPIQSQTIYSIRSILQTESKDRRKFLRQVGRNIYRKSEYKSRWIRITGLGGFREVGRSALLVQTDESYVLVDFGVNIAALKDPTKAYPHFDAPEFRYVLDEGLLDAIIITHAHLDHSGMLPYLFRYKLFDGPIYTTPPTRDLMTLLQQDFIEIQHMNGVEPLYRPKDIKEVIKHTITLDYGEVRDIAPDIRLTLHNAGHILGSSIVHLHIGNGLHNIAITGDFKFIPTRLFEPAVSRFPRLETLVMESTYGGSNDYQMPREEAEKRLIEVIHQTLKRGGKVLIPAMAVGRAQEIMMVLEEYARVGGIEVPIYLDGMIWEATAIHTAYPEYLSKHIREQIFHEGYNPFLNPIFKSVANSRERQDIIDSGEPAIIIATSGMLVGGPSVEYFKQLAPDPKNSIIFVSYQAEGTLGRQVQRGLREIPIVGEDGRTEVINVNMEVHTIDGFSGHADRRELMSYVARVRPRPERIITVHGEAHKCLDLSSSIHKKFGISTRAPNNLDAIRLK.

The interval 9–76 (DDILKEIREI…ISVRPDPDIL (68 aa)) is KHa. Residues 77–144 (LPPEKAEELI…WAPRVVRTPP (68 aa)) form a KHb region. Positions 185–395 (WIRITGLGGF…LVMESTYGGS (211 aa)) are metallo-beta-lactamase N-terminus. Zn(2+) is bound by residues His-253, His-255, Asp-257, His-258, His-341, and Asp-364. Positions 396 to 589 (NDYQMPREEA…MEVHTIDGFS (194 aa)) are beta-Casp. Residues 590-648 (GHADRRELMSYVARVRPRPERIITVHGEAHKCLDLSSSIHKKFGISTRAPNNLDAIRLK) are metallo-beta-lactamase C-terminus. His-615 provides a ligand contact to Zn(2+).

It belongs to the metallo-beta-lactamase superfamily. RNA-metabolizing metallo-beta-lactamase-like family. FttA subfamily. As to quaternary structure, homodimer. Probably interacts transiently with RNA polymerase (RNAP), (via at least the RNAP stalk subunits Rpo4 and Rpo7), interacts transiently with the Spt4-Spt5 complex. Zn(2+) serves as cofactor.

Its activity is regulated as follows. Transcription termination is stimulated by the Spt4-Spt5 complex. Dipicolinic acid inhibits FttA-mediated termination in vitro and inhibits growth in vivo. In terms of biological role, terminates transcription on the whole genome. Termination is linked to FttA-mediated RNA cleavage and does not require NTP hydrolysis. Cleaves endonucleolytically at the RNA exit channel of RNA polymerase (RNAP); the 5'-3' exonuclease activity of this protein degrades the nascent RNA released from RNAP. Facilitates transcription termination; addition of this factor to stalled transcription elongation complexes (TEC) promotes nascent transcript cleavage and releases RNA polymerase (RNAP) from DNA in vitro. Transcription termination competes with productive transcription elongation. Termination is stimulated by C-rich transcripts and inhibited by G-rich transcripts; the Spt4-Spt5 complex enhances termination on C-less transcripts. Yields an approximately 100 nucleotide RNA, consistent with endonucleolytic cleavage at the RNA exit channel of RNAP. This Thermococcus kodakarensis (strain ATCC BAA-918 / JCM 12380 / KOD1) (Pyrococcus kodakaraensis (strain KOD1)) protein is Transcription termination factor FttA.